A 66-amino-acid polypeptide reads, in one-letter code: Large ribosomal subunit protein bL35 (66 aa).

The protein belongs to the bacterial ribosomal protein bL35 family.

This Treponema denticola (strain ATCC 35405 / DSM 14222 / CIP 103919 / JCM 8153 / KCTC 15104) protein is Large ribosomal subunit protein bL35.